We begin with the raw amino-acid sequence, 75 residues long: Conotoxin Vn5.6 (75 aa).

The signal sequence occupies residues 1–19 (MLCLPVFIILLLLASPAAP). Residues 20-59 (NPLEKRIQSDLIRAALEDADMKTGEREILNIIDSISDVAK) constitute a propeptide that is removed on maturation. The residue at position 60 (glutamine 60) is a Pyrrolidone carboxylic acid.

It belongs to the conotoxin T superfamily. Contains 2 disulfide bonds that can be either 'C1-C3, C2-C4' or 'C1-C4, C2-C3', since these disulfide connectivities have been observed for conotoxins with cysteine framework V (for examples, see AC P0DQQ7 and AC P81755). As to expression, expressed by the venom duct.

It localises to the secreted. This chain is Conotoxin Vn5.6, found in Conus ventricosus (Mediterranean cone).